Reading from the N-terminus, the 407-residue chain is Shaggy-related protein kinase iota (407 aa).

Residues 1 to 19 (MASLPLGPQPHALAPPLQL) are compositionally biased toward low complexity. The segment at 1–23 (MASLPLGPQPHALAPPLQLHDGD) is disordered. The residue at position 2 (alanine 2) is an N-acetylalanine. The Protein kinase domain maps to 70–354 (YMAERVVGTG…ALEACAHPFF (285 aa)). Residues 76-84 (VGTGSFGIV) and lysine 99 each bind ATP. Catalysis depends on aspartate 195, which acts as the Proton acceptor. The residue at position 230 (tyrosine 230) is a Phosphotyrosine.

Belongs to the protein kinase superfamily. CMGC Ser/Thr protein kinase family. GSK-3 subfamily. Binds to KIB1. Interacts with BSK6. Post-translationally, autophosphorylated mainly on threonine and serine residues.

It carries out the reaction L-seryl-[protein] + ATP = O-phospho-L-seryl-[protein] + ADP + H(+). The enzyme catalyses L-threonyl-[protein] + ATP = O-phospho-L-threonyl-[protein] + ADP + H(+). Its function is as follows. Phosphorylates BSK1, BSK3, BSK5, BSK6, BSK8 and BSK11 in vitro. May mediate extracellular signals to regulate transcription in differentiating cells. In Arabidopsis thaliana (Mouse-ear cress), this protein is Shaggy-related protein kinase iota (ASK9).